The primary structure comprises 474 residues: Dol-P-Glc:Glc(2)Man(9)GlcNAc(2)-PP-Dol alpha-1,2-glucosyltransferase (474 aa).

Residues 1–6 (MAQLEG) are Cytoplasmic-facing. The helical transmembrane segment at 7–27 (YYFSAALSCTFLVSCLLFSAF) threads the bilayer. At 28 to 64 (SRALREPYMDEIFHLPQAQRYCEGRFSLSQWDPMITT) the chain is on the extracellular side. Residues 65 to 85 (LPGLYLVSVGVVKPASWLLGW) traverse the membrane as a helical segment. The Cytoplasmic segment spans residues 86–97 (SEHVICSIGVLR). The chain crosses the membrane as a helical span at residues 98–118 (FVNLLFSVGNFYLLYLLFRKV). The Extracellular segment spans residues 119-126 (QPRNKASS). Residues 127 to 147 (SIQRILSTLTLAVFPTLYFFN) traverse the membrane as a helical segment. Residues 148–150 (FLY) lie on the Cytoplasmic side of the membrane. The chain crosses the membrane as a helical span at residues 151 to 171 (YTEAGSVFFTLFAYLMCLYGN). Residues 172–175 (HRTS) lie on the Extracellular side of the membrane. The chain crosses the membrane as a helical span at residues 176 to 196 (ALLGFCGFMFRQTNIIWAAFC). Residues 197–256 (AGHLIAQKCSEAWKIELQKKKEERLAPTKGPLSELRRVLQFLLVYAMSLKNLRMLFLLTW) are Cytoplasmic-facing. Residues 257-277 (PYVLLLLAFFAFVVVNGGIVV) traverse the membrane as a helical segment. The Extracellular segment spans residues 278 to 283 (GDRSSH). Residues 284 to 304 (EACLHFPQLFYFFSFTAFFSF) form a helical membrane-spanning segment. Residues 305-317 (PHLLSLTKVKTFL) are Cytoplasmic-facing. The chain crosses the membrane as a helical span at residues 318–338 (SLVWKRRVQFSVVTLVSILLV). Over 339-365 (WKFTYVHKYLLADNRHYTFYVWKRVFQ) the chain is Extracellular. A helical membrane pass occupies residues 366-386 (RHEVVKYLLVPAYIFAGWAIA). The Cytoplasmic portion of the chain corresponds to 387–392 (DSLKAK). The helical transmembrane segment at 393 to 413 (SIFWNLMFFVCLVASTVPQKL) threads the bilayer. The Extracellular portion of the chain corresponds to 414–436 (LEFRYFILPYIIYRLNIPLPPIS). Residues 437–457 (RLVCELGCYTVVNFVTFYIFL) traverse the membrane as a helical segment. Topologically, residues 458–473 (NKTFQWPNSQDIQRFM) are cytoplasmic.

This sequence belongs to the ALG10 glucosyltransferase family. In terms of assembly, interacts with KCNH1; may regulate KCNH1, possibly by regulating its N-glycosylation. Interacts with KCNH2; may reduce KCNH2 sensitivity to classic proarrhythmic drug blockade, possibly by regulating its N-glycosylation.

The protein localises to the endoplasmic reticulum membrane. The enzyme catalyses an alpha-D-Glc-(1-&gt;3)-alpha-D-Glc-(1-&gt;3)-alpha-D-Man-(1-&gt;2)-alpha-D-Man-(1-&gt;2)-alpha-D-Man-(1-&gt;3)-[alpha-D-Man-(1-&gt;2)-alpha-D-Man-(1-&gt;3)-[alpha-D-Man-(1-&gt;2)-alpha-D-Man-(1-&gt;6)]-alpha-D-Man-(1-&gt;6)]-beta-D-Man-(1-&gt;4)-beta-D-GlcNAc-(1-&gt;4)-alpha-D-GlcNAc-diphospho-di-trans,poly-cis-dolichol + a di-trans,poly-cis-dolichyl beta-D-glucosyl phosphate = a alpha-D-Glc-(1-&gt;2)-alpha-D-Glc-(1-&gt;3)-alpha-D-Glc-(1-&gt;3)-alpha-D-Man-(1-&gt;2)-alpha-D-Man-(1-&gt;2)-alpha-D-Man-(1-&gt;3)-[alpha-D-Man-(1-&gt;2)-alpha-D-Man-(1-&gt;3)-[alpha-D-Man-(1-&gt;2)-alpha-D-Man-(1-&gt;6)]-alpha-D-Man-(1-&gt;6)]-beta-D-Man-(1-&gt;4)-beta-D-GlcNAc-(1-&gt;4)-alpha-D-GlcNAc-diphospho-di-trans,poly-cis-dolichol + a di-trans,poly-cis-dolichyl phosphate + H(+). It functions in the pathway protein modification; protein glycosylation. In terms of biological role, dol-P-Glc:Glc(2)Man(9)GlcNAc(2)-PP-Dol alpha-1,2-glucosyltransferase that operates in the biosynthetic pathway of dolichol-linked oligosaccharides, the glycan precursors employed in protein asparagine (N)-glycosylation. The assembly of dolichol-linked oligosaccharides begins on the cytosolic side of the endoplasmic reticulum membrane and finishes in its lumen. The sequential addition of sugars to dolichol pyrophosphate produces dolichol-linked oligosaccharides containing fourteen sugars, including two GlcNAcs, nine mannoses and three glucoses. Once assembled, the oligosaccharide is transferred from the lipid to nascent proteins by oligosaccharyltransferases. In the lumen of the endoplasmic reticulum, adds the third and last glucose residue from dolichyl phosphate glucose (Dol-P-Glc) onto the lipid-linked oligosaccharide intermediate Glc(2)Man(9)GlcNAc(2)-PP-Dol to produce Glc(3)Man(9)GlcNAc(2)-PP-Dol. The protein is Dol-P-Glc:Glc(2)Man(9)GlcNAc(2)-PP-Dol alpha-1,2-glucosyltransferase of Mus musculus (Mouse).